Here is a 953-residue protein sequence, read N- to C-terminus: GATA zinc finger domain-containing protein 14 (953 aa).

A compositionally biased stretch (polar residues) spans 1-21 (MFEKIPNQNSHSMGDNNTGYY). Disordered regions lie at residues 1 to 109 (MFEK…SPNR) and 216 to 756 (TYGS…TQPQ). Positions 22–89 (NNNNNNNNNN…QLPSPQLSQP (68 aa)) are enriched in low complexity. Residues 90-109 (NSMNTTPNQTSPNLRSSPNR) show a composition bias toward polar residues. Low complexity-rich tracts occupy residues 219-330 (SSNT…VNAN), 342-683 (NIYN…PNSS), and 690-756 (GNNG…TQPQ). Residues 893-918 (CTSCGTTQTPEWRKGPAGGKSLCNAC) form a GATA-type zinc finger. The disordered stretch occupies residues 934 to 953 (KVETTSSPPSTSMNVVNLLN).

The chain is GATA zinc finger domain-containing protein 14 (gtaN) from Dictyostelium discoideum (Social amoeba).